Consider the following 300-residue polypeptide: GTPase Era (300 aa).

One can recognise an Era-type G domain in the interval Arg8–Gln176. A G1 region spans residues Gly16–Ser23. Gly16–Ser23 is a binding site for GTP. Positions Gln42–His46 are G2. Residues Asp63–Gly66 form a G3 region. GTP-binding positions include Asp63–Leu67 and Asn125–Asp128. Positions Asn125–Asp128 are G4. The tract at residues Ile155–Ala157 is G5. A KH type-2 domain is found at Val199–Gly283.

It belongs to the TRAFAC class TrmE-Era-EngA-EngB-Septin-like GTPase superfamily. Era GTPase family. As to quaternary structure, monomer.

It is found in the cytoplasm. Its subcellular location is the cell inner membrane. Its function is as follows. An essential GTPase that binds both GDP and GTP, with rapid nucleotide exchange. Plays a role in 16S rRNA processing and 30S ribosomal subunit biogenesis and possibly also in cell cycle regulation and energy metabolism. In Azotobacter vinelandii (strain DJ / ATCC BAA-1303), this protein is GTPase Era.